The chain runs to 354 residues: MSEPLKPRIDFEQPLQPIDEPVLKAAQAFDQHAAENFYPADPELDAENEEGRVEGLVNAALKPKRSLWRKMVTVGIALFGVSVIAQSVQWVNQAWQQQDWIALGATTAGGLIVLAGVGSVVTEWRRLYRLRQRAEERDIARELLVSHGIGQGRAFCEKLARQAGLDQGHPALQRWQASLHETHNDREVVELYAKLVQPSLDNLARAEISRYAAESALMIAVSPLALVDMAFIAWRNIRLINRIAALYGIELGYFSRIRLFRLVLLNIAFAGASELVREVGMDWLSQDLAARLSARAAQGIGAGLLTARLGIKAMELCRPLPWLGDDKPKLGDFRRQLIGQLKNTLPKKDKPAQQ.

The next 3 helical transmembrane spans lie at 71 to 91, 101 to 121, and 214 to 234; these read MVTV…VQWV, IALG…GSVV, and ESAL…FIAW.

The protein belongs to the UPF0283 family.

Its subcellular location is the cell inner membrane. This chain is UPF0283 protein YcjF (ycjF), found in Yersinia enterocolitica.